A 676-amino-acid chain; its full sequence is Envelope glycoprotein (676 aa).

Residues 1 to 32 (MGASGILQLPRERFRKTSFFVWVIILFHKVFS) form the signal peptide. At 33–650 (IPLGVVHNNT…GSNWWTGWKQ (618 aa)) the chain is on the extracellular side. N-linked (GlcNAc...) asparagine; by host glycosylation is present at Asn40. 5 disulfide bridges follow: Cys53–Cys609, Cys108–Cys135, Cys121–Cys147, Cys511–Cys556, and Cys601–Cys608. The tract at residues 54 to 201 (RDKLSSTSQL…DFFQSPPLHE (148 aa)) is receptor-binding. Asn204, Asn228, Asn257, Asn268, and Asn296 each carry an N-linked (GlcNAc...) asparagine; by host glycan. Positions 305–485 (ELSFVPVPET…LSGPGFLTNT (181 aa)) are mucin-like region. Residues 356 to 463 (IKGKDTMPTT…PTTLPEQHTA (108 aa)) are disordered. Positions 361–374 (TMPTTVTGVPTTTP) are enriched in low complexity. Polar residues predominate over residues 402–422 (TTQPAKTTSQPTNSTESTTLN). Residue Asn414 is glycosylated (N-linked (GlcNAc...) asparagine; by host). The segment covering 423-440 (PTSEPSSRGTGPSSPTVP) has biased composition (low complexity). The N-linked (GlcNAc...) asparagine; by host glycan is linked to Asn441. Over residues 452 to 463 (TTPTTLPEQHTA) the composition is skewed to polar residues. The interval 524-539 (GAAIGLAWIPYFGPAA) is fusion peptide. A coiled-coil region spans residues 554 to 595 (LICGLRQLANETTQALQLFLRATTELRTFSILNRKAIDFLLQ). A glycan (N-linked (GlcNAc...) asparagine; by host) is linked at Asn563. A coiled-coil region spans residues 615-634 (WTKNITDKIDQIIHDFVDNN). Asn618 is a glycosylation site (N-linked (GlcNAc...) asparagine; by host). The chain crosses the membrane as a helical span at residues 651 to 671 (WVPAGIGITGVIIAIIALLCI). S-palmitoyl cysteine; by host attachment occurs at residues Cys670 and Cys672. At 672-676 (CKFML) the chain is on the cytoplasmic side.

It belongs to the filoviruses glycoprotein family. As to quaternary structure, homotrimer; each monomer consists of a GP1 and a GP2 subunit linked by disulfide bonds. The resulting peplomers (GP1,2) protrude from the virus surface as spikes. GP1 and GP2delta are part of GP1,2delta soluble complexes released by ectodomain shedding. GP1,2 interacts with host integrin ITGAV/alpha-V and CLEC10A. Also binds human CD209 and CLEC4M (collectively referred to as DC-SIGN(R)), as well as human FOLR1. Interacts with host entry receptor NPC1. Post-translationally, the signal peptide region modulates GP's high mannose glycosylation, thereby determining the efficiency of the interactions with DC-SIGN(R). N-glycosylated. In terms of processing, O-glycosylated in the mucin-like region. Post-translationally, palmitoylation of GP2 is not required for its function. Specific enzymatic cleavages in vivo yield mature proteins. The precursor is processed into GP1 and GP2 by host cell furin in the trans Golgi, and maybe by other host proteases, to yield the mature GP1 and GP2 proteins. The cleavage site corresponds to the furin optimal cleavage sequence [KR]-X-[KR]-R. This cleavage does not seem to be required for function. After the internalization of the virus into cell endosomes, GP1 C-terminus is removed by the endosomal proteases cathepsin B, cathepsin L, or both, leaving a 19-kDa N-terminal fragment which is further digested by cathepsin B. Proteolytic processing of GP1,2 by host ADAM17 can remove the transmembrane anchor of GP2 and leads to shedding of complexes consisting in GP1 and truncated GP2 (GP1,2delta).

The protein localises to the virion membrane. It localises to the host cell membrane. Its subcellular location is the secreted. GP1 is responsible for binding to the receptor(s) on target cells. Interacts with CD209/DC-SIGN and CLEC4M/DC-SIGNR which act as cofactors for virus entry into the host cell. Binding to CD209 and CLEC4M, which are respectively found on dendritic cells (DCs), and on endothelial cells of liver sinusoids and lymph node sinuses, facilitate infection of macrophages and endothelial cells. These interactions not only facilitate virus cell entry, but also allow capture of viral particles by DCs and subsequent transmission to susceptible cells without DCs infection (trans infection). Binding to the macrophage specific lectin CLEC10A also seems to enhance virus infectivity. Interaction with FOLR1/folate receptor alpha may be a cofactor for virus entry in some cell types, although results are contradictory. Members of the Tyro3 receptor tyrosine kinase family also seem to be cell entry factors in filovirus infection. Once attached, the virions are internalized through clathrin-dependent endocytosis and/or macropinocytosis. After internalization of the virus into the endosomes of the host cell, proteolysis of GP1 by two cysteine proteases, CTSB/cathepsin B and CTSL/cathepsin L presumably induces a conformational change of GP2, unmasking its fusion peptide and initiating membranes fusion. Functionally, GP2 acts as a class I viral fusion protein. Under the current model, the protein has at least 3 conformational states: pre-fusion native state, pre-hairpin intermediate state, and post-fusion hairpin state. During viral and target cell membrane fusion, the coiled coil regions (heptad repeats) assume a trimer-of-hairpins structure, positioning the fusion peptide in close proximity to the C-terminal region of the ectodomain. The formation of this structure appears to drive apposition and subsequent fusion of viral and target cell membranes. Responsible for penetration of the virus into the cell cytoplasm by mediating the fusion of the membrane of the endocytosed virus particle with the endosomal membrane. Low pH in endosomes induces an irreversible conformational change in GP2, releasing the fusion hydrophobic peptide. Its function is as follows. GP1,2 which is the disulfid-linked complex of GP1 and GP2, mediates endothelial cell activation and decreases endothelial barrier function. Mediates activation of primary macrophages. At terminal stages of the viral infection, when its expression is high, GP1,2 down-modulates the expression of various host cell surface molecules that are essential for immune surveillance and cell adhesion. Down-modulates integrins ITGA1, ITGA2, ITGA3, ITGA4, ITGA5, ITGA6, ITGAV and ITGB1. GP1,2 alters the cellular recycling of the dimer alpha-V/beta-3 via a dynamin-dependent pathway. Decrease in the host cell surface expression of various adhesion molecules may lead to cell detachment, contributing to the disruption of blood vessel integrity and hemorrhages developed during Ebola virus infection (cytotoxicity). This cytotoxicity appears late in the infection, only after the massive release of viral particles by infected cells. Down-modulation of host MHC-I, leading to altered recognition by immune cells, may explain the immune suppression and inflammatory dysfunction linked to Ebola infection. Also down-modulates EGFR surface expression. Counteracts the antiviral effect of host tetherin. In terms of biological role, GP2delta is part of the complex GP1,2delta released by host ADAM17 metalloprotease. This secreted complex may play a role in the pathogenesis of the virus by efficiently blocking the neutralizing antibodies that would otherwise neutralize the virus surface glycoproteins GP1,2. Might therefore contribute to the lack of inflammatory reaction seen during infection in spite the of extensive necrosis and massive virus production. GP1,2delta does not seem to be involved in activation of primary macrophages. This is Envelope glycoprotein (GP) from Tai Forest ebolavirus (strain Cote d'Ivoire-94) (TAFV).